A 79-amino-acid polypeptide reads, in one-letter code: Small ribosomal subunit protein uS17 (79 aa).

It belongs to the universal ribosomal protein uS17 family. As to quaternary structure, part of the 30S ribosomal subunit.

In terms of biological role, one of the primary rRNA binding proteins, it binds specifically to the 5'-end of 16S ribosomal RNA. The polypeptide is Small ribosomal subunit protein uS17 (Bartonella henselae (strain ATCC 49882 / DSM 28221 / CCUG 30454 / Houston 1) (Rochalimaea henselae)).